The primary structure comprises 878 residues: Alanine--tRNA ligase (878 aa).

His-564, His-568, Cys-665, and His-669 together coordinate Zn(2+).

The protein belongs to the class-II aminoacyl-tRNA synthetase family. Zn(2+) is required as a cofactor.

It is found in the cytoplasm. The enzyme catalyses tRNA(Ala) + L-alanine + ATP = L-alanyl-tRNA(Ala) + AMP + diphosphate. In terms of biological role, catalyzes the attachment of alanine to tRNA(Ala) in a two-step reaction: alanine is first activated by ATP to form Ala-AMP and then transferred to the acceptor end of tRNA(Ala). Also edits incorrectly charged Ser-tRNA(Ala) and Gly-tRNA(Ala) via its editing domain. The polypeptide is Alanine--tRNA ligase (Natranaerobius thermophilus (strain ATCC BAA-1301 / DSM 18059 / JW/NM-WN-LF)).